We begin with the raw amino-acid sequence, 487 residues long: Protein NEN2 (487 aa).

Residues 18–179 enclose the Exonuclease domain; the sequence is FFDVETTIPF…LDDVRMNFEV (162 aa). Residues aspartate 20 and glutamate 22 each contribute to the Mg(2+) site. Catalysis depends on histidine 167, which acts as the Proton donor/acceptor. Aspartate 172 lines the Mg(2+) pocket. 2 disordered regions span residues 200–233 and 269–291; these read NSVTTTTPETSSRRRRTIKKSPLQSPTDQQTGEN and SDVPMEEEQNQQSETVASEGTGD. Polar residues predominate over residues 221–233; sequence PLQSPTDQQTGEN.

The cofactor is Mg(2+). Expressed in the sieve elements and phloem pole pericycle cells.

The protein localises to the cytoplasm. The protein resides in the nucleus. Functionally, probable exonuclease involved in enuclation of sieve elements. This is Protein NEN2 from Arabidopsis thaliana (Mouse-ear cress).